A 591-amino-acid polypeptide reads, in one-letter code: Aspartate--tRNA ligase (591 aa).

Glu-176 provides a ligand contact to L-aspartate. Positions 200–203 (QILK) are aspartate. Arg-222 serves as a coordination point for L-aspartate. ATP-binding positions include 222–224 (RDE) and Gln-231. L-aspartate is bound at residue His-450. Glu-484 lines the ATP pocket. An L-aspartate-binding site is contributed by Arg-491. 536-539 (GLDR) contacts ATP.

The protein belongs to the class-II aminoacyl-tRNA synthetase family. Type 1 subfamily. As to quaternary structure, homodimer.

It is found in the cytoplasm. The enzyme catalyses tRNA(Asp) + L-aspartate + ATP = L-aspartyl-tRNA(Asp) + AMP + diphosphate. Its function is as follows. Catalyzes the attachment of L-aspartate to tRNA(Asp) in a two-step reaction: L-aspartate is first activated by ATP to form Asp-AMP and then transferred to the acceptor end of tRNA(Asp). This Listeria monocytogenes serovar 1/2a (strain ATCC BAA-679 / EGD-e) protein is Aspartate--tRNA ligase.